Reading from the N-terminus, the 94-residue chain is Pyrimidine/purine nucleoside phosphorylase (94 aa).

This sequence belongs to the nucleoside phosphorylase PpnP family.

The catalysed reaction is a purine D-ribonucleoside + phosphate = a purine nucleobase + alpha-D-ribose 1-phosphate. It carries out the reaction adenosine + phosphate = alpha-D-ribose 1-phosphate + adenine. It catalyses the reaction cytidine + phosphate = cytosine + alpha-D-ribose 1-phosphate. The enzyme catalyses guanosine + phosphate = alpha-D-ribose 1-phosphate + guanine. The catalysed reaction is inosine + phosphate = alpha-D-ribose 1-phosphate + hypoxanthine. It carries out the reaction thymidine + phosphate = 2-deoxy-alpha-D-ribose 1-phosphate + thymine. It catalyses the reaction uridine + phosphate = alpha-D-ribose 1-phosphate + uracil. The enzyme catalyses xanthosine + phosphate = alpha-D-ribose 1-phosphate + xanthine. In terms of biological role, catalyzes the phosphorolysis of diverse nucleosides, yielding D-ribose 1-phosphate and the respective free bases. Can use uridine, adenosine, guanosine, cytidine, thymidine, inosine and xanthosine as substrates. Also catalyzes the reverse reactions. The protein is Pyrimidine/purine nucleoside phosphorylase of Teredinibacter turnerae (strain ATCC 39867 / T7901).